Here is a 188-residue protein sequence, read N- to C-terminus: Peptide deformylase (188 aa).

The disordered stretch occupies residues 70–90 (AEPVACDHDGHHHHHQPTKKE). 2 residues coordinate Fe cation: Cys-113 and His-155. Residue Glu-156 is part of the active site. Fe cation is bound at residue His-159.

This sequence belongs to the polypeptide deformylase family. Fe(2+) is required as a cofactor.

The catalysed reaction is N-terminal N-formyl-L-methionyl-[peptide] + H2O = N-terminal L-methionyl-[peptide] + formate. Its function is as follows. Removes the formyl group from the N-terminal Met of newly synthesized proteins. Requires at least a dipeptide for an efficient rate of reaction. N-terminal L-methionine is a prerequisite for activity but the enzyme has broad specificity at other positions. The sequence is that of Peptide deformylase from Novosphingobium aromaticivorans (strain ATCC 700278 / DSM 12444 / CCUG 56034 / CIP 105152 / NBRC 16084 / F199).